The sequence spans 128 residues: Ribonuclease P protein component 4 (128 aa).

Zn(2+) is bound by residues C63, C66, C92, and C95.

It belongs to the eukaryotic/archaeal RNase P protein component 4 family. Consists of a catalytic RNA component and at least 4 protein subunits. Forms a subcomplex with Rnp1 which stimulates the catalytic RNA. Requires Zn(2+) as cofactor.

It is found in the cytoplasm. It carries out the reaction Endonucleolytic cleavage of RNA, removing 5'-extranucleotides from tRNA precursor.. Functionally, part of ribonuclease P, a protein complex that generates mature tRNA molecules by cleaving their 5'-ends. The polypeptide is Ribonuclease P protein component 4 (Methanocaldococcus jannaschii (strain ATCC 43067 / DSM 2661 / JAL-1 / JCM 10045 / NBRC 100440) (Methanococcus jannaschii)).